The chain runs to 541 residues: Tetratricopeptide repeat protein 8 (541 aa).

Residues 14–47 (YFRRRKFQLCADLCTQMLEKSPYDQEPDPELPVH) form a TPR 1 repeat. Residues 118 to 137 (PITGFLRPSTQSGRPGTMEQ) are disordered. TPR repeat units follow at residues 251–284 (WWWK…QEMV), 285–317 (DTFL…FPGE), 318–351 (VTLL…DNTH), 352–385 (VEAI…GIYN), 386–419 (GQLF…AENE), 423–456 (ADVW…NNNH), and 457–490 (AEAY…APHM).

Part of BBSome complex, that contains BBS1, BBS2, BBS4, BBS5, BBS7, BBS8/TTC8, BBS9 and BBIP10. Interacts with PCM1. Interacts with CCDC28B. Interacts with PKD1. Widely expressed.

It is found in the cytoplasm. The protein resides in the cytoskeleton. It localises to the microtubule organizing center. The protein localises to the centrosome. Its subcellular location is the cell projection. It is found in the cilium membrane. The protein resides in the centriolar satellite. It localises to the cilium. The BBSome complex is thought to function as a coat complex required for sorting of specific membrane proteins to the primary cilia. The BBSome complex is required for ciliogenesis but is dispensable for centriolar satellite function. This ciliogenic function is mediated in part by the Rab8 GDP/GTP exchange factor, which localizes to the basal body and contacts the BBSome. Rab8(GTP) enters the primary cilium and promotes extension of the ciliary membrane. Firstly the BBSome associates with the ciliary membrane and binds to RAB3IP/Rabin8, the guanosyl exchange factor (GEF) for Rab8 and then the Rab8-GTP localizes to the cilium and promotes docking and fusion of carrier vesicles to the base of the ciliary membrane. The BBSome complex, together with the LTZL1, controls SMO ciliary trafficking and contributes to the sonic hedgehog (SHH) pathway regulation. Required for proper BBSome complex assembly and its ciliary localization. The protein is Tetratricopeptide repeat protein 8 (TTC8) of Homo sapiens (Human).